A 3011-amino-acid chain; its full sequence is Genome polyprotein (3011 aa).

Serine 2 carries the post-translational modification N-acetylserine; by host. The tract at residues 2–23 is interaction with STAT1; it reads STIPKPQRKTKRNTNRRPQDVK. Residues 2-58 form an interaction with EIF2AK2/PKR region; the sequence is STIPKPQRKTKRNTNRRPQDVKFPGGGQIVGGVYLLPRRGPRLGVRATRKTSERSQP. The tract at residues 2–59 is interaction with DDX3X; the sequence is STIPKPQRKTKRNTNRRPQDVKFPGGGQIVGGVYLLPRRGPRLGVRATRKTSERSQPR. The disordered stretch occupies residues 2-75; the sequence is STIPKPQRKT…PKVRRPEGRT (74 aa). Over 2–168 the chain is Cytoplasmic; it reads STIPKPQRKT…EDGVNYATGN (167 aa). 2 consecutive short sequence motifs (nuclear localization signal) follow at residues 5 to 13 and 38 to 43; these read PKPQRKTKR and PRRGPR. The segment covering 7–16 has biased composition (basic residues); that stretch reads PQRKTKRNTN. The segment covering 32 to 47 has biased composition (low complexity); it reads GGVYLLPRRGPRLGVR. Position 53 is a phosphoserine; by host (serine 53). 2 short sequence motifs (nuclear localization signal) span residues 58–64 and 66–71; these read PRGRRQP and PKVRRP. Over residues 58–68 the composition is skewed to basic residues; it reads PRGRRQPIPKV. A Phosphoserine; by host modification is found at serine 99. The tract at residues 112–152 is important for endoplasmic reticulum and mitochondrial localization; that stretch reads PRRRSRNLGKVIDTLTCGFADLMGYIPLVGAPLGGAARALA. Serine 116 carries the post-translational modification Phosphoserine; by host PKA. Residues 122–173 form an interaction with APOA2 region; sequence VIDTLTCGFADLMGYIPLVGAPLGGAARALAHGVRVLEDGVNYATGNLPGCS. Residues 164 to 167 are important for lipid droplets localization; that stretch reads YATG. Residues 169-189 traverse the membrane as a helical segment; the sequence is LPGCSFSIFLLALLSCLTVPA. A propeptide spans 178 to 191 (ER anchor for the core protein, removed in mature form by host signal peptidase); that stretch reads LLALLSCLTVPASA. Over 190–358 the chain is Lumenal; it reads SAYQVRNSTG…AGAHWGVLAG (169 aa). Asparagine 196, asparagine 209, and asparagine 234 each carry an N-linked (GlcNAc...) asparagine; by host glycan. The interval 265-296 is important for fusion; that stretch reads LVGSATLCSALYVGDLCGSVFLIGQLFTFSPR. A glycan (N-linked (GlcNAc...) asparagine; by host) is linked at asparagine 305. The helical transmembrane segment at 359–379 threads the bilayer; the sequence is IAYFSMVGNWAKVLVVLLLFA. Topologically, residues 380–725 are lumenal; sequence GVDAETIVSG…WEYVVLLFLL (346 aa). Positions 385–411 are HVR1; that stretch reads TIVSGGQAARAMSGLVSLFTPGAKQNI. Asparagine 417, asparagine 423, asparagine 430, and asparagine 448 each carry an N-linked (GlcNAc...) (high mannose) asparagine; by host glycan. 4 cysteine pairs are disulfide-bonded: cysteine 429-cysteine 552, cysteine 452-cysteine 459, cysteine 486-cysteine 494, and cysteine 503-cysteine 508. Residues 474-479 are HVR2; the sequence is HANGSG. Residues 480–493 form a CD81-binding 1 region; sequence PDQRPYCWHYPPKP. N-linked (GlcNAc...) (high mannose) asparagine; by host glycosylation is present at asparagine 532. The N-linked (GlcNAc...) asparagine; by host glycan is linked to asparagine 540. The CD81-binding 2 stretch occupies residues 544–551; the sequence is PPLGNWFG. Asparagine 556 is a glycosylation site (N-linked (GlcNAc...) (high mannose) asparagine; by host). A disulfide bridge links cysteine 564 with cysteine 569. Asparagine 576 carries N-linked (GlcNAc...) (high mannose) asparagine; by host glycosylation. Intrachain disulfides connect cysteine 581–cysteine 585, cysteine 597–cysteine 620, and cysteine 607–cysteine 644. 2 N-linked (GlcNAc...) (high mannose) asparagine; by host glycosylation sites follow: asparagine 623 and asparagine 645. Cysteines 652 and 677 form a disulfide. Residues 660–671 form a PKR/eIF2-alpha phosphorylation homology domain (PePHD) region; it reads SELSPLLLSTTQ. The chain crosses the membrane as a helical span at residues 726 to 746; it reads LADARVCSCLWMMLLISQAEA. Residues 747–757 are Lumenal-facing; it reads ALENLVILNAA. A helical transmembrane segment spans residues 758–778; sequence SLAGTRGLVSFLVFFCFAWYL. The Cytoplasmic segment spans residues 779–781; that stretch reads KGR. The chain crosses the membrane as a helical span at residues 782-803; sequence WVPGAAYALYGMWPLLLLLLAL. At 804–813 the chain is on the lumenal side; that stretch reads PQRAYALDTE. The helical transmembrane segment at 814–834 threads the bilayer; it reads VAASCGGVVLVGLMALTLSPY. Over 835 to 838 the chain is Cytoplasmic; the sequence is YKRC. Residues 839-859 form a helical membrane-spanning segment; that stretch reads ISWCLWWLQYFLTRVEAQLHV. Topologically, residues 860–881 are lumenal; it reads WVPPLNVRGGRDAVILLMCVVH. Residues 882-902 form a helical membrane-spanning segment; sequence PTLVFDITKLLLAVLGPLWIL. Positions 903–1026 constitute a Peptidase C18 domain; sequence QASLLKVPYF…GMVSKGWRLL (124 aa). Over 903-1657 the chain is Cytoplasmic; sequence QASLLKVPYF…CMSADLEVVT (755 aa). Positions 904–1206 are protease NS2-3; sequence ASLLKVPYFV…PVESLETTMR (303 aa). Cysteine 922 carries S-palmitoyl cysteine; by host lipidation. The tract at residues 929 to 949 is interaction with host SCPS1; that stretch reads VGGHYVQMAIIKLGALTGTYV. Active-site for protease NS2 activity; shared with dimeric partner residues include histidine 952, glutamate 972, and cysteine 993. The Peptidase S29 domain occupies 1027-1208; the sequence is APITAYAQQT…ESLETTMRSP (182 aa). Catalysis depends on charge relay system; for serine protease NS3 activity residues histidine 1083 and aspartate 1107. 2 residues coordinate Zn(2+): cysteine 1123 and cysteine 1125. The active-site Charge relay system; for serine protease NS3 activity is the serine 1165. Positions 1171 and 1175 each coordinate Zn(2+). A Helicase ATP-binding domain is found at 1217–1369; sequence PAVPQSFQVA…ANIEEVALST (153 aa). 1230-1237 is a binding site for ATP; the sequence is APTGSGKS. Serine 1237 and glutamate 1317 together coordinate Mg(2+). A DECH box motif is present at residues 1316-1319; the sequence is DECH. The segment at 1486–1497 is RNA-binding; that stretch reads QRRGRTGRGKPG. The chain crosses the membrane as a helical span at residues 1658–1678; it reads STWVLVGGVLAALAAYCLSTG. The interval 1679 to 1690 is NS3-binding; it reads CVVIVGRIVLSG. Over 1679–1805 the chain is Cytoplasmic; the sequence is CVVIVGRIVL…AVTSPLTTSQ (127 aa). A helical transmembrane segment spans residues 1806–1824; sequence TLLFNILGGWVAAQLAAPG. At 1825–1828 the chain is on the lumenal side; that stretch reads AATA. A helical transmembrane segment spans residues 1829-1849; the sequence is FVGSGLAGAAVGSVGLGRVLV. Aspartate 1850 is a topological domain (cytoplasmic). A helical membrane pass occupies residues 1851–1871; it reads ILAGYGAGVAGALVAFKIMSG. Residues 1872-1881 are Lumenal-facing; that stretch reads ELPSTEDLVN. A helical transmembrane segment spans residues 1882-1902; sequence LLPAILSPGALVVGVVCAAIL. Residues 1903 to 1972 lie on the Cytoplasmic side of the membrane; sequence RRHVGPGEGA…WLSSESTTPC (70 aa). Cysteine 1972 carries S-palmitoyl cysteine; by host lipidation. Residues 1973-2002 lie within the membrane without spanning it; sequence SGSWLRDIWDWICEVLSDFKTWLKTKLMPH. Residues 2003–2990 lie on the Cytoplasmic side of the membrane; that stretch reads LPGIPFVSCQ…YHSVSHARPR (988 aa). Residues cysteine 2011, cysteine 2029, cysteine 2031, and cysteine 2052 each contribute to the Zn(2+) site. The FKBP8-binding stretch occupies residues 2120 to 2208; that stretch reads EFFTELDGVR…ASSSASQLSA (89 aa). The transcriptional activation stretch occupies residues 2120-2332; sequence EFFTELDGVR…PVPPPRKKRT (213 aa). The interval 2135–2139 is interaction with non-structural protein 4A; sequence PPCKP. Residues 2187–2207 are disordered; that stretch reads GRRLARGSPPSEASSSASQLS. The interaction with host SKP2 stretch occupies residues 2189–2441; sequence RLARGSPPSE…TPCAAEEQKL (253 aa). Residue serine 2194 is modified to Phosphoserine; by host; in p56. 5 positions are modified to phosphoserine; by host; in p58: serine 2197, serine 2201, serine 2204, serine 2207, and serine 2210. Positions 2210–2249 are ISDR; that stretch reads SLKATCTINHDSPDAELIEANLLWRQEMGGNITRVESENK. Residues 2210–2275 are interaction with EIF2AK2/PKR; sequence SLKATCTINH…REISVPAEIL (66 aa). The segment at 2249–2306 is NS4B-binding; sequence KVVILDSFDPLVAEEDEREISVPAEILRKSRRFTQALPIWARPDYNPPLIETWKKPNY. The segment at 2312–2334 is disordered; that stretch reads HGCPLPPPQSPPVPPPRKKRTVV. Pro residues predominate over residues 2315–2326; that stretch reads PLPPPQSPPVPP. The short motif at 2322–2325 is the SH3-binding element; that stretch reads PPVP. Positions 2326 to 2334 match the Nuclear localization signal motif; the sequence is PPRKKRTVV. Residue lysine 2350 forms a Glycyl lysine isopeptide (Lys-Gly) (interchain with G-Cter in ubiquitin) linkage. Low complexity predominate over residues 2351–2369; it reads SFGSSSTSGITGDNTTTSS. The segment at 2351-2408 is disordered; that stretch reads SFGSSSTSGITGDNTTTSSEPAPSGCSPDSDAESYSSMPPLEGEPGDPDLSDGSWSTV. The V3 stretch occupies residues 2354-2377; that stretch reads SSSTSGITGDNTTTSSEPAPSGCS. 2 positions are modified to phosphoserine; by host: serine 2449 and serine 2462. A RdRp catalytic domain is found at 2634 to 2752; sequence PMGFSYDTRC…ICESAGVQED (119 aa). Mg(2+) contacts are provided by aspartate 2640, aspartate 2738, and aspartate 2739. The helical transmembrane segment at 2991–3011 threads the bilayer; the sequence is WFWFCLLLLAAGVGIYLLPNR.

It belongs to the hepacivirus polyprotein family. As to quaternary structure, homooligomer. Interacts with E1 (via C-terminus). Interacts with the non-structural protein 5A. Interacts (via N-terminus) with host STAT1 (via SH2 domain); this interaction results in decreased STAT1 phosphorylation and ubiquitin-mediated proteasome-dependent STAT1 degradation, leading to decreased IFN-stimulated gene transcription. Interacts with host STAT3; this interaction constitutively activates STAT3. Interacts with host LTBR receptor. Interacts with host TNFRSF1A receptor and possibly induces apoptosis. Interacts with host HNRPK. Interacts with host YWHAE. Interacts with host UBE3A/E6AP. Interacts with host DDX3X. Interacts with host APOA2. Interacts with host RXRA protein. Interacts with host SP110 isoform 3/Sp110b; this interaction sequesters the transcriptional corepressor SP110 away from the nucleus. Interacts with host CREB3 nuclear transcription protein; this interaction triggers cell transformation. Interacts with host ACY3. Interacts with host C1QR1. Interacts with host RBM24; this interaction, which enhances the interaction of the mature core protein with 5'-UTR, may inhibit viral translation and favor replication. Interacts with host EIF2AK2/PKR; this interaction induces the autophosphorylation of EIF2AK2. Part of the viral assembly initiation complex composed of NS2, E1, E2, NS3, NS4A, NS5A and the mature core protein. In terms of assembly, forms a heterodimer with envelope glycoprotein E2. Interacts with mature core protein. Interacts with protease NS2. The heterodimer E1/E2 interacts with host CLDN1; this interaction plays a role in viral entry into host cell. Interacts with host SPSB2 (via C-terminus). Part of the viral assembly initiation complex composed of NS2, E1, E2, NS3, NS4A, NS5A and the mature core protein. Interacts with host NEURL3; this interaction prevents E1 binding to glycoprotein E2. Forms a heterodimer with envelope glycoprotein E1. Interacts with host CD81 and SCARB1 receptors; these interactions play a role in viral entry into host cell. Interacts with host EIF2AK2/PKR; this interaction inhibits EIF2AK2 and probably allows the virus to evade the innate immune response. Interacts with host CD209/DC-SIGN and CLEC4M/DC-SIGNR. Interact with host SPCS1; this interaction is essential for viral particle assembly. Interacts with protease NS2. The heterodimer E1/E2 interacts with host CLDN1; this interaction plays a role in viral entry into host cell. Part of the viral assembly initiation complex composed of NS2, E1, E2, NS3, NS4A, NS5A and the mature core protein. Interacts with host SLC3A2/4F2hc; the interaction may facilitate viral entry into host cell. Interacts with human PLSCR1. As to quaternary structure, homohexamer. Homoheptamer. Interacts with protease NS2. In terms of assembly, homodimer. Interacts with host SPCS1; this interaction is essential for viral particle assembly. Interacts with envelope glycoprotein E1. Interacts with envelope glycoprotein E2. Interacts with viroporin p7. Interacts with serine protease/helicase NS3. Part of the replication complex composed of NS2, NS3, NS4A, NS4B, NS5A and the RNA-directed RNA polymerase embedded in an ER-derived membranous web. Part of the viral assembly initiation complex composed of NS2, E1, E2, NS3, NS4A, NS5A and the mature core protein. Interacts with protease NS2. Interacts with non-structural protein 4A; this interaction stabilizes the folding of NS3 serine protease. NS3-NS4A interaction is essential for NS3 activation and allows membrane anchorage of the latter. NS3/NS4A complex also prevents phosphorylation of host IRF3, thus preventing the establishment of dsRNA induced antiviral state. Interacts with host MAVS; this interaction leads to the cleavage and inhibition of host MAVS. Interacts with host TICAM1; this interaction leads to the cleavage and inhibition of host TICAM1. Interacts with host TANK-binding kinase/TBK1; this interaction results in the inhibition of the association between TBK1 and IRF3, which leads to the inhibition of IRF3 activation. Interacts with host RBM24. Part of the replication complex composed of NS2, NS3, NS4A, NS4B, NS5A and the RNA-directed RNA polymerase embedded in an ER-derived membranous web. Part of the viral assembly initiation complex composed of NS2, E1, E2, NS3, NS4A, NS5A and the mature core protein. As to quaternary structure, interacts with NS3 serine protease; this interaction stabilizes the folding of NS3 serine protease. NS3-NS4A interaction is essential for NS3 activation and allows membrane anchorage of the latter. Interacts with non-structural protein 5A (via N-terminus). Part of the replication complex composed of NS2, NS3, NS4A, NS4B, NS5A and the RNA-directed RNA polymerase embedded in an ER-derived membranous web. Part of the viral assembly initiation complex composed of NS2, E1, E2, NS3, NS4A, NS5A and the mature core protein. In terms of assembly, homomultimer. Interacts with non-structural protein NS5A. Interacts with host PLA2G4C; this interaction likely initiates the recruitment of replication complexes to lipid droplets. Interacts with host STING; this interaction disrupts the interaction between STING and TBK1 thereby suppressing the interferon signaling. Part of the replication complex composed of NS2, NS3, NS4A, NS4B, NS5A and the RNA-directed RNA polymerase embedded in an ER-derived membranous web. Monomer. Homodimer; dimerization is required for RNA-binding. Interacts with the mature core protein. Interacts (via N-terminus) with non-structural protein 4A. Interacts with non-structural protein 4B. Interacts (via region D2) with RNA-directed RNA polymerase. Part of the viral assembly initiation complex composed of NS2, E1, E2, NS3, NS4A, NS5A and the mature core protein. Part of the replication complex composed of NS2, NS3, NS4A, NS4B, NS5A and the RNA-directed RNA polymerase embedded in an ER-derived membranous web. Interacts with host GRB2. Interacts with host BIN1. Interacts with host PIK3R1. Interacts with host SRCAP. Interacts with host FKBP8. Interacts (via C-terminus) with host VAPB (via MSP domain). Interacts with host EIF2AK2/PKR; this interaction leads to disruption of EIF2AK2 dimerization by NS5A and probably allows the virus to evade the innate immune response. Interacts (via N-terminus) with host PACSIN2 (via N-terminus); this interaction attenuates protein kinase C alpha-mediated phosphorylation of PACSIN2 by disrupting the interaction between PACSIN2 and PRKCA. Interacts (via N-terminus) with host SRC kinase (via SH2 domain). Interacts with most Src-family kinases. Interacts with host IFI27 and SKP2; promotes the ubiquitin-mediated proteasomal degradation of NS5A. Interacts with host GPS2. Interacts with host TNFRSF21; this interaction allows the modulation by the virus of JNK, p38 MAPK, STAT3, and Akt signaling pathways in a DR6-dependent manner. Interacts (via N-terminus) with host CIDEB (via N-terminus); this interaction seems to regulate the association of HCV particles with APOE. Interacts with host CHKA/Choline Kinase-alpha; CHKA bridges host PI4KA and NS5A and potentiates NS5A-stimulated PI4KA activity, which then facilitates the targeting of the ternary complex to the ER for viral replication. Interacts with host SPSB2 (via C-terminus); this interaction targets NS5A for ubiquitination and degradation. Interacts with host RAB18; this interaction may promote the association of NS5A and other replicase components with lipid droplets. Interacts (via region D2) with host PPIA/CYPA; the interaction stimulates RNA-binding ability of NS5A and is dependent on the peptidyl-prolyl cis-trans isomerase activity of PPIA/CYPA. Interacts with host TRIM14; this interaction induces the degradation of NS5A. As to quaternary structure, homooligomer. Interacts with non-structural protein 5A. Interacts with host VAPB. Interacts with host PRK2/PKN2. Interacts with host HNRNPA1 and SEPT6; these interactions facilitate viral replication. Part of the replication complex composed of NS2, NS3, NS4A, NS4B, NS5A and the RNA-directed RNA polymerase. The cofactor is Zn(2+). Requires Mg(2+) as cofactor. Specific enzymatic cleavages in vivo yield mature proteins. The structural proteins, core, E1, E2 and p7 are produced by proteolytic processing by host signal peptidases. The core protein precursor is synthesized as a 23 kDa, which is retained in the ER membrane through the hydrophobic signal peptide. Cleavage by the signal peptidase releases the 21 kDa mature core protein. The cleavage of the core protein precursor occurs between aminoacids 176 and 188 but the exact cleavage site is not known. Some degraded forms of the core protein appear as well during the course of infection. The other proteins (p7, NS2, NS3, NS4A, NS4B, NS5A and NS5B) are cleaved by the viral proteases. Autoprocessing between NS2 and NS3 is mediated by the NS2 cysteine protease catalytic domain and regulated by the NS3 N-terminal domain. Post-translationally, phosphorylated by host PKC and PKA. In terms of processing, ubiquitinated; mediated by UBE3A and leading to core protein subsequent proteasomal degradation. Highly N-glycosylated. Post-translationally, palmitoylation is required for NS2/3 autoprocessing and E2 recruitment to membranes. In terms of processing, palmitoylated. This modification may play a role in its polymerization or in protein-protein interactions. Phosphorylated on serines in a basal form termed p56. p58 is a hyperphosphorylated form of p56. p56 and p58 coexist in the cell in roughly equivalent amounts. Hyperphosphorylation is dependent on the presence of NS4A. Host CSNK1A1/CKI-alpha or RPS6KB1 kinases may be responsible for NS5A phosphorylation. Post-translationally, tyrosine phosphorylation is essential for the interaction with host SRC. In terms of processing, the N-terminus is phosphorylated by host PRK2/PKN2.

It localises to the host endoplasmic reticulum membrane. The protein resides in the host mitochondrion membrane. Its subcellular location is the virion. The protein localises to the host cytoplasm. It is found in the host nucleus. It localises to the host lipid droplet. The protein resides in the virion membrane. Its subcellular location is the host mitochondrion. The protein localises to the host cell membrane. It is found in the host perinuclear region. The catalysed reaction is Hydrolysis of four peptide bonds in the viral precursor polyprotein, commonly with Asp or Glu in the P6 position, Cys or Thr in P1 and Ser or Ala in P1'.. It carries out the reaction a ribonucleoside 5'-triphosphate + H2O = a ribonucleoside 5'-diphosphate + phosphate + H(+). It catalyses the reaction ATP + H2O = ADP + phosphate + H(+). The enzyme catalyses RNA(n) + a ribonucleoside 5'-triphosphate = RNA(n+1) + diphosphate. Inhibited by the antiviral drug hexamethylene amiloride. Inhibition by amantadine appears to be genotype-dependent. Also inhibited by long-alkyl-chain iminosugar derivatives. With respect to regulation, activity is up-regulated by PRK2/PKN2-mediated phosphorylation. In terms of biological role, packages viral RNA to form a viral nucleocapsid, and promotes virion budding. Participates in the viral particle production as a result of its interaction with the non-structural protein 5A. Binds RNA and may function as a RNA chaperone to induce the RNA structural rearrangements taking place during virus replication. Modulates viral translation initiation by interacting with viral IRES and 40S ribosomal subunit. Affects various cell signaling pathways, host immunity and lipid metabolism. Prevents the establishment of cellular antiviral state by blocking the interferon-alpha/beta (IFN-alpha/beta) and IFN-gamma signaling pathways and by blocking the formation of phosphorylated STAT1 and promoting ubiquitin-mediated proteasome-dependent degradation of STAT1. Activates STAT3 leading to cellular transformation. Regulates the activity of cellular genes, including c-myc and c-fos. May repress the promoter of p53, and sequester CREB3 and SP110 isoform 3/Sp110b in the cytoplasm. Represses cell cycle negative regulating factor CDKN1A, thereby interrupting an important check point of normal cell cycle regulation. Targets transcription factors involved in the regulation of inflammatory responses and in the immune response: suppresses TNF-induced NF-kappa-B activation, and activates AP-1. Binds to dendritic cells (DCs) via C1QR1, resulting in down-regulation of T-lymphocytes proliferation. Alters lipid metabolism by interacting with hepatocellular proteins involved in lipid accumulation and storage. Induces up-regulation of FAS promoter activity, and thereby contributes to the increased triglyceride accumulation in hepatocytes (steatosis). Functionally, forms a heterodimer with envelope glycoprotein E2, which mediates virus attachment to the host cell, virion internalization through clathrin-dependent endocytosis and fusion with host membrane. Fusion with the host cell is most likely mediated by both E1 and E2, through conformational rearrangements of the heterodimer required for fusion rather than a classical class II fusion mechanism. E1/E2 heterodimer binds host apolipoproteins such as APOB and ApoE thereby forming a lipo-viro-particle (LVP). APOE associated to the LVP allows the initial virus attachment to cell surface receptors such as the heparan sulfate proteoglycans (HSPGs), syndecan-1 (SDC1), syndecan-1 (SDC2), the low-density lipoprotein receptor (LDLR) and scavenger receptor class B type I (SCARB1). The cholesterol transfer activity of SCARB1 allows E2 exposure and binding of E2 to SCARB1 and the tetraspanin CD81. E1/E2 heterodimer binding on CD81 activates the epithelial growth factor receptor (EGFR) signaling pathway. Diffusion of the complex E1-E2-EGFR-SCARB1-CD81 to the cell lateral membrane allows further interaction with Claudin 1 (CLDN1) and occludin (OCLN) to finally trigger HCV entry. Its function is as follows. Forms a heterodimer with envelope glycoprotein E1, which mediates virus attachment to the host cell, virion internalization through clathrin-dependent endocytosis and fusion with host membrane. Fusion with the host cell is most likely mediated by both E1 and E2, through conformational rearrangements of the heterodimer required for fusion rather than a classical class II fusion mechanism. The interaction between envelope glycoprotein E2 and host apolipoprotein E/APOE allows the proper assembly, maturation and infectivity of the viral particles. This interaction is probably promoted via the up-regulation of cellular autophagy by the virus. E1/E2 heterodimer binds host apolipoproteins such as APOB and APOE thereby forming a lipo-viro-particle (LVP). APOE associated to the LVP allows the initial virus attachment to cell surface receptors such as the heparan sulfate proteoglycans (HSPGs), syndecan-1 (SDC1), syndecan-1 (SDC2), the low-density lipoprotein receptor (LDLR) and scavenger receptor class B type I (SCARB1). The cholesterol transfer activity of SCARB1 allows E2 exposure and binding of E2 to SCARB1 and the tetraspanin CD81. E1/E2 heterodimer binding on CD81 activates the epithelial growth factor receptor (EGFR) signaling pathway. Diffusion of the complex E1-E2-EGFR-SCARB1-CD81 to the cell lateral membrane allows further interaction with Claudin 1 (CLDN1) and occludin (OCLN) to finally trigger HCV entry. Inhibits host EIF2AK2/PKR activation, preventing the establishment of an antiviral state. Viral ligand for CD209/DC-SIGN and CLEC4M/DC-SIGNR, which are respectively found on dendritic cells (DCs), and on liver sinusoidal endothelial cells and macrophage-like cells of lymph node sinuses. These interactions allow the capture of circulating HCV particles by these cells and subsequent facilitated transmission to permissive cells such as hepatocytes and lymphocyte subpopulations. The interaction between E2 and host amino acid transporter complex formed by SLC3A2 and SLC7A5/LAT1 may facilitate viral entry into host cell. Ion channel protein that acts as a viroporin and plays an essential role in the assembly, envelopment and secretion of viral particles. Regulates the host cell secretory pathway, which induces the intracellular retention of viral glycoproteins and favors assembly of viral particles. Creates a pore in acidic organelles and releases Ca(2+) and H(+) in the cytoplasm of infected cells, leading to a productive viral infection. High levels of cytoplasmic Ca(2+) may trigger membrane trafficking and transport of viral ER-associated proteins to viroplasms, sites of viral genome replication. This ionic imbalance induces the assembly of the inflammasome complex, which triggers the maturation of pro-IL-1beta into IL-1beta through the action of caspase-1. Targets also host mitochondria and induces mitochondrial depolarization. In addition of its role as a viroporin, acts as a lipid raft adhesion factor. In terms of biological role, cysteine protease required for the proteolytic auto-cleavage between the non-structural proteins NS2 and NS3. The N-terminus of NS3 is required for the function of NS2 protease (active region NS2-3). Promotes the initiation of viral particle assembly by mediating the interaction between structural and non-structural proteins. Functionally, displays three enzymatic activities: serine protease with a chymotrypsin-like fold, NTPase and RNA helicase. NS3 serine protease, in association with NS4A, is responsible for the cleavages of NS3-NS4A, NS4A-NS4B, NS4B-NS5A and NS5A-NS5B. The NS3/NS4A complex prevents phosphorylation of host IRF3, thus preventing the establishment of dsRNA induced antiviral state. The NS3/NS4A complex induces host amino acid transporter component SLC3A2, thus contributing to HCV propagation. NS3 RNA helicase binds to RNA and unwinds both dsDNA and dsRNA in the 3' to 5' direction, and likely resolves RNA complicated stable secondary structures in the template strand. Binds a single ATP and catalyzes the unzipping of a single base pair of dsRNA. Inhibits host antiviral proteins TBK1 and IRF3 thereby preventing the establishment of an antiviral state. Cleaves host MAVS/CARDIF thereby preventing the establishment of an antiviral state. Cleaves host TICAM1/TRIF, thereby disrupting TLR3 signaling and preventing the establishment of an antiviral state. Its function is as follows. Induces a specific membrane alteration that serves as a scaffold for the virus replication complex. This membrane alteration gives rise to the so-called ER-derived membranous web that contains the replication complex. NS4B self-interaction contributes to its function in membranous web formation. Promotes host TRIF protein degradation in a CASP8-dependent manner thereby inhibiting host TLR3-mediated interferon signaling. Disrupts the interaction between STING and TBK1 contributing to the inhibition of interferon signaling. Phosphorylated protein that is indispensable for viral replication and assembly. Both hypo- and hyperphosphorylated states are required for the viral life cycle. The hyperphosphorylated form of NS5A is an inhibitor of viral replication. Involved in RNA-binding and especially in binding to the viral genome. Zinc is essential for RNA-binding. Participates in the viral particle production as a result of its interaction with the mature viral core protein. Its interaction with host VAPB may target the viral replication complex to vesicles. Down-regulates viral IRES translation initiation. Mediates interferon resistance, presumably by interacting with and inhibiting host EIF2AK2/PKR. Prevents BIN1-induced apoptosis. Acts as a transcriptional activator of some host genes important for viral replication when localized in the nucleus. Via the interaction with host PACSIN2, modulates lipid droplet formation in order to promote virion assembly. Modulates TNFRSF21/DR6 signaling pathway for viral propagation. In terms of biological role, RNA-dependent RNA polymerase that performs primer-template recognition and RNA synthesis during viral replication. Initiates RNA transcription/replication at a flavin adenine dinucleotide (FAD), resulting in a 5'- FAD cap on viral RNAs. In this way, recognition of viral 5' RNA by host pattern recognition receptors can be bypassed, thereby evading activation of antiviral pathways. The protein is Genome polyprotein of Hepatitis C virus genotype 1b (isolate HC-J1) (HCV).